Consider the following 353-residue polypeptide: Dimethylsulfoniopropionate lyase 2 (353 aa).

Active-site proton donor/acceptor residues include cysteine 125 and cysteine 274. Residues 326-353 (DPNETDVSKGRPTKAEHRFGPEFEEMLQ) form a disordered region. Residues 331–346 (DVSKGRPTKAEHRFGP) are compositionally biased toward basic and acidic residues.

It belongs to the aspartate/glutamate racemases family. ALMA1 subfamily. Homotetramer.

The enzyme catalyses S,S-dimethyl-beta-propiothetin = acrylate + dimethyl sulfide + H(+). Mediates cleavage of dimethylsulfoniopropionate (DMSP) into dimethyl sulfide (DMS) and acrylate. DMS is the principal form by which sulfur is transported from oceans to the atmosphere and is a key component of the ocean sulfur cycle. The chain is Dimethylsulfoniopropionate lyase 2 from Emiliania huxleyi (strain CCMP1516).